The primary structure comprises 463 residues: Alpha-L-arabinofuranosidase B (463 aa).

A signal peptide spans 1–26 (MIPQLNRNYAWAIALGLVARSSLVSA). The interval 27-308 (GPCDIYASGG…ILGIGGHNSK (282 aa)) is catalytic. An intrachain disulfide couples C29 to C39. A glycan (N-linked (GlcNAc...) asparagine) is linked at N81. 2 disulfide bridges follow: C89–C94 and C184–C185. Residue D227 participates in substrate binding. The Nucleophile role is filled by E229. A substrate-binding site is contributed by N230. The N-linked (GlcNAc...) asparagine glycan is linked to N280. G304 contributes to the substrate binding site. Residues 309 to 463 (LTVGSSISLR…VSWVVSASFA (155 aa)) form an ABD region. N332 carries an N-linked (GlcNAc...) asparagine glycan. C366 and C404 are disulfide-bonded. The substrate site is built by H381, N383, F384, H428, D430, L433, and D453.

Belongs to the glycosyl hydrolase 54 family. Post-translationally, residue Asn-280 is mannosylated with up to 7 mannose residues.

It localises to the secreted. The catalysed reaction is Hydrolysis of terminal non-reducing alpha-L-arabinofuranoside residues in alpha-L-arabinosides.. The protein operates within glycan metabolism; L-arabinan degradation. Functionally, secreted alpha-L-arabinofuranosidase that actively hydrolyzes p-NP-alpha-L-arabinofuranoside and is specific for furanose configuration of the carbohydrate ring. Also exhibits significant activity against polymeric arabinose-containing substrates such as arabinan and arabinoxylan, a major component of plant hemicellulose. This Penicillium canescens protein is Alpha-L-arabinofuranosidase B (abfB).